The following is a 325-amino-acid chain: Ribosomal RNA small subunit methyltransferase H (325 aa).

Residues 38-40, Asp-55, Phe-82, Asp-103, and Gln-110 each bind S-adenosyl-L-methionine; that span reads GGY. Disordered regions lie at residues 256–275 and 281–307; these read SGGD…AARA and PARK…RSAV.

The protein belongs to the methyltransferase superfamily. RsmH family.

It is found in the cytoplasm. It catalyses the reaction cytidine(1402) in 16S rRNA + S-adenosyl-L-methionine = N(4)-methylcytidine(1402) in 16S rRNA + S-adenosyl-L-homocysteine + H(+). In terms of biological role, specifically methylates the N4 position of cytidine in position 1402 (C1402) of 16S rRNA. The chain is Ribosomal RNA small subunit methyltransferase H from Sphingopyxis alaskensis (strain DSM 13593 / LMG 18877 / RB2256) (Sphingomonas alaskensis).